The following is a 314-amino-acid chain: Ribonuclease Z (314 aa).

Zn(2+) is bound by residues His-63, His-65, Asp-67, His-68, His-142, Asp-205, and His-263. The Proton acceptor role is filled by Asp-67.

It belongs to the RNase Z family. As to quaternary structure, homodimer. Requires Zn(2+) as cofactor.

It carries out the reaction Endonucleolytic cleavage of RNA, removing extra 3' nucleotides from tRNA precursor, generating 3' termini of tRNAs. A 3'-hydroxy group is left at the tRNA terminus and a 5'-phosphoryl group is left at the trailer molecule.. Zinc phosphodiesterase, which displays some tRNA 3'-processing endonuclease activity. Probably involved in tRNA maturation, by removing a 3'-trailer from precursor tRNA. The polypeptide is Ribonuclease Z (Kineococcus radiotolerans (strain ATCC BAA-149 / DSM 14245 / SRS30216)).